The chain runs to 678 residues: Serine/threonine-protein kinase PLK (678 aa).

The 288-residue stretch at 22 to 309 (YRPGKLLGKG…VKECLDHSWL (288 aa)) folds into the Protein kinase domain. Residues 28–36 (LGKGGFAYV) and Lys-51 each bind ATP. Asp-145 acts as the Proton acceptor in catalysis. Phosphothreonine; by autocatalysis occurs at positions 179 and 183. POLO box domains are found at residues 435-516 (YIMS…YLEN) and 563-644 (FLKK…IIKA). The disordered stretch occupies residues 658-678 (KDSTKKSASGSSTRQLGQGGE). Over residues 663–678 (KSASGSSTRQLGQGGE) the composition is skewed to polar residues.

It belongs to the protein kinase superfamily. Ser/Thr protein kinase family. CDC5/Polo subfamily. As to quaternary structure, interacts with Kin-13. Post-translationally, autophosphorylated. Autophosphorylation is critical for its function in cell growth, cytokinesis and formation of flagella.

The protein localises to the cell projection. It is found in the cilium. Its subcellular location is the flagellum. It localises to the cytoplasm. The protein resides in the cytoskeleton. The protein localises to the flagellum basal body. It is found in the flagellum axoneme. Its subcellular location is the spindle. It localises to the membrane. It carries out the reaction L-seryl-[protein] + ATP = O-phospho-L-seryl-[protein] + ADP + H(+). The enzyme catalyses L-threonyl-[protein] + ATP = O-phospho-L-threonyl-[protein] + ADP + H(+). With respect to regulation, inhibited by GW843286X (GW), an ATP-competitive inhibitor. Inhibition leads to reduced growth, increased number of cells with more than four nuclei, increased number of cells with condensed nuclei, cell cycle arrest at G2/M or G1/S phase depending on the treatment time with GW, and increased length of membrane-bound portions of the caudal and anterior flagella. Functionally, involved in cell cycle. Involved in cell division. Involved in cytokinesis. Involved in flagella biogenesis and in regulation of flagella length in interphase. Involved in formation of median bodies during interphase. Phosphorylates Kin-13 in vitro. Likely regulates microtubule (MT) depolymerizing activity of Kin-13. The sequence is that of Serine/threonine-protein kinase PLK from Giardia intestinalis (strain ATCC 50803 / WB clone C6) (Giardia lamblia).